Consider the following 141-residue polypeptide: ATP synthase epsilon chain (141 aa).

The protein belongs to the ATPase epsilon chain family. In terms of assembly, F-type ATPases have 2 components, CF(1) - the catalytic core - and CF(0) - the membrane proton channel. CF(1) has five subunits: alpha(3), beta(3), gamma(1), delta(1), epsilon(1). CF(0) has three main subunits: a, b and c.

It localises to the cell inner membrane. Produces ATP from ADP in the presence of a proton gradient across the membrane. The chain is ATP synthase epsilon chain from Bordetella petrii (strain ATCC BAA-461 / DSM 12804 / CCUG 43448).